The sequence spans 344 residues: Phenylalanine--tRNA ligase alpha subunit (344 aa).

Mg(2+) is bound at residue glutamate 255.

This sequence belongs to the class-II aminoacyl-tRNA synthetase family. Phe-tRNA synthetase alpha subunit type 1 subfamily. In terms of assembly, tetramer of two alpha and two beta subunits. Requires Mg(2+) as cofactor.

It is found in the cytoplasm. It carries out the reaction tRNA(Phe) + L-phenylalanine + ATP = L-phenylalanyl-tRNA(Phe) + AMP + diphosphate + H(+). The chain is Phenylalanine--tRNA ligase alpha subunit from Persephonella marina (strain DSM 14350 / EX-H1).